We begin with the raw amino-acid sequence, 869 residues long: Dynamin-3 (869 aa).

The 267-residue stretch at 28–294 folds into the Dynamin-type G domain; it reads LLELPQIAVV…LTNHIRDTLP (267 aa). The interval 38–45 is G1 motif; sequence GGQSAGKS. 38–46 is a binding site for GTP; it reads GGQSAGKSS. Residues 64–66 form a G2 motif region; sequence VTR. Positions 136–139 are G3 motif; the sequence is DLPG. Positions 205-208 are G4 motif; the sequence is TKLD. Residue 205 to 211 participates in GTP binding; that stretch reads TKLDLMD. Tyrosine 231 carries the post-translational modification Phosphotyrosine. Residues 235–238 are G5 motif; sequence VNRS. Residue 236 to 239 coordinates GTP; the sequence is NRSQ. An N6-acetyllysine modification is found at lysine 299. The region spanning 515-621 is the PH domain; sequence QGTNLPPSRQ…ACDSQEDVDS (107 aa). The residue at position 603 (tyrosine 603) is a Phosphotyrosine. Position 604 is an N6-acetyllysine (lysine 604). One can recognise a GED domain in the interval 659 to 750; the sequence is VETIRNLVDS…IIGDISTATV (92 aa). Residues 747-869 are disordered; sequence TATVSTPAPP…IRPLESSLLD (123 aa). Residues serine 769 and serine 773 each carry the phosphoserine modification. Pro residues-rich tracts occupy residues 797–822 and 832–855; these read PAIP…PPFP and PQVP…PSPT. The residue at position 853 (serine 853) is a Phosphoserine.

This sequence belongs to the TRAFAC class dynamin-like GTPase superfamily. Dynamin/Fzo/YdjA family.

It is found in the cytoplasm. The protein localises to the cytoskeleton. The catalysed reaction is GTP + H2O = GDP + phosphate + H(+). Microtubule-associated force-producing protein involved in producing microtubule bundles and able to bind and hydrolyze GTP. Most probably involved in vesicular trafficking processes, in particular endocytosis. This Homo sapiens (Human) protein is Dynamin-3 (DNM3).